Here is a 292-residue protein sequence, read N- to C-terminus: Intermediate transcription factor 3 small subunit (292 aa).

The protein belongs to the orthopoxvirus OPG134 family. As to quaternary structure, heterodimer of a 45 kDa (A23R) and a 32 kDa (A8R) subunit to form the virus intermediate transcription factor (VITF)-3.

Its function is as follows. Acts with RNA polymerase to initiate transcription from intermediate gene promoters. This Monkeypox virus protein is Intermediate transcription factor 3 small subunit (OPG134).